The primary structure comprises 1363 residues: Neurexin-1 (1363 aa).

Over 1-1287 (SKRRDMTVFS…EVIRESSSTT (1287 aa)) the chain is Extracellular. The N-linked (GlcNAc...) asparagine glycan is linked to Asn49. The EGF-like 1 domain occupies 67–105 (QSRLCAREDVCLNGGVCSVLNDQAVCDCSQTGFRGKDCS). 3 disulfide bridges follow: Cys71-Cys83, Cys77-Cys92, and Cys94-Cys104. Laminin G-like domains are found at residues 132–329 (IATF…AFKC) and 336–528 (DPIT…KPSC). Positions 178, 195, and 263 each coordinate Ca(2+). Disulfide bonds link Cys293/Cys329, Cys499/Cys528, Cys536/Cys547, Cys541/Cys556, and Cys558/Cys568. Residues 532–569 (TAKPCLSNPCKNNGVCRDGWNRYVCDCSGTGYLGRSCE) enclose the EGF-like 2 domain. 2 consecutive Laminin G-like domains span residues 574 to 747 (ILSY…IDYC) and 761 to 936 (DPVT…ERGC). Asn646 is a glycosylation site (N-linked (GlcNAc...) asparagine). 4 disulfide bridges follow: Cys908/Cys936, Cys943/Cys954, Cys948/Cys963, and Cys965/Cys975. Positions 939–976 (PSTTCQEDSCANQGVCLQQWDGFSCDCSMTSFSGPLCN) constitute an EGF-like 3 domain. Positions 982-1180 (YIFSKGGGQI…DANIVIEGNV (199 aa)) constitute a Laminin G-like 5 domain. N-linked (GlcNAc...) asparagine glycosylation is present at Asn1079. The disordered stretch occupies residues 1244 to 1280 (CPSDDEDIDPCEPSSGGLANPTRAGGGREYPGSSEVI). A helical membrane pass occupies residues 1288 to 1308 (GMVVGIVAAAALCILILLYAM). Residues 1309–1363 (YKYRNRDEGSYHVDESRNYISNSAQSNGAVIKEKQPNSAKSSNKNKKNKDKEYYV) are Cytoplasmic-facing. Positions 1330 to 1363 (NSAQSNGAVIKEKQPNSAKSSNKNKKNKDKEYYV) are disordered.

It belongs to the neurexin family. In terms of assembly, the cytoplasmic C-terminal region binds to CASK. The laminin G-like domain 1 binds to NXPH1. Specific isoforms bind to alpha-dystroglycan and to alpha-latrotoxin. Post-translationally, N- and O-glycosylated.

The protein resides in the membrane. Its function is as follows. Neuronal cell surface protein that may be involved in cell recognition and cell adhesion. May mediate intracellular signaling. This chain is Neurexin-1 (NRXN1), found in Gallus gallus (Chicken).